The sequence spans 310 residues: Methionyl-tRNA formyltransferase (310 aa).

111–114 (SLLP) contacts (6S)-5,6,7,8-tetrahydrofolate.

The protein belongs to the Fmt family.

It carries out the reaction L-methionyl-tRNA(fMet) + (6R)-10-formyltetrahydrofolate = N-formyl-L-methionyl-tRNA(fMet) + (6S)-5,6,7,8-tetrahydrofolate + H(+). Functionally, attaches a formyl group to the free amino group of methionyl-tRNA(fMet). The formyl group appears to play a dual role in the initiator identity of N-formylmethionyl-tRNA by promoting its recognition by IF2 and preventing the misappropriation of this tRNA by the elongation apparatus. In Rhodopseudomonas palustris (strain TIE-1), this protein is Methionyl-tRNA formyltransferase.